A 323-amino-acid polypeptide reads, in one-letter code: Beta-ketoacyl-[acyl-carrier-protein] synthase III (323 aa).

Active-site residues include Cys113 and His250. Positions 251–255 (QANKR) are ACP-binding. Residue Asn280 is part of the active site.

It belongs to the thiolase-like superfamily. FabH family. In terms of assembly, homodimer.

It localises to the cytoplasm. The enzyme catalyses malonyl-[ACP] + acetyl-CoA + H(+) = 3-oxobutanoyl-[ACP] + CO2 + CoA. It functions in the pathway lipid metabolism; fatty acid biosynthesis. Catalyzes the condensation reaction of fatty acid synthesis by the addition to an acyl acceptor of two carbons from malonyl-ACP. Catalyzes the first condensation reaction which initiates fatty acid synthesis and may therefore play a role in governing the total rate of fatty acid production. Possesses both acetoacetyl-ACP synthase and acetyl transacylase activities. Its substrate specificity determines the biosynthesis of branched-chain and/or straight-chain of fatty acids. This is Beta-ketoacyl-[acyl-carrier-protein] synthase III from Brucella melitensis biotype 2 (strain ATCC 23457).